Here is a 643-residue protein sequence, read N- to C-terminus: Threonine--tRNA ligase (643 aa).

The TGS domain occupies 1–61; sequence MIKVSLKDGS…NEDVSLSICT (61 aa). The tract at residues 240–540 is catalytic; the sequence is DHNKLGRELK…LIEKYAGAFP (301 aa). The Zn(2+) site is built by Cys-335, His-386, and His-517.

It belongs to the class-II aminoacyl-tRNA synthetase family. In terms of assembly, homodimer. Zn(2+) serves as cofactor.

It localises to the cytoplasm. The catalysed reaction is tRNA(Thr) + L-threonine + ATP = L-threonyl-tRNA(Thr) + AMP + diphosphate + H(+). Catalyzes the attachment of threonine to tRNA(Thr) in a two-step reaction: L-threonine is first activated by ATP to form Thr-AMP and then transferred to the acceptor end of tRNA(Thr). Also edits incorrectly charged L-seryl-tRNA(Thr). In Clostridium botulinum (strain Alaska E43 / Type E3), this protein is Threonine--tRNA ligase.